The primary structure comprises 127 residues: UPF0102 protein Glov_2230 (127 aa).

Belongs to the UPF0102 family.

This chain is UPF0102 protein Glov_2230, found in Trichlorobacter lovleyi (strain ATCC BAA-1151 / DSM 17278 / SZ) (Geobacter lovleyi).